A 543-amino-acid chain; its full sequence is MESASPAPAQAGDPALARDVKKRRTFAIISHPDAGKTTLTEKLLLFGGAIQMAGTVKAKKSGKFATSDWMAVEQERGISVASSVMQFSYGDCVFNLLDTPGHKDFSEDTYRVLTAVDAAIMVVDAAKGVEEQTIKLLEVCRLRDTPIITFINKLDREVREPLELLDEIESILKIHCAPVTWPIGMGKRFQGVYHLIHDEILRFKAGEENAGQQFESLQGLGDAKLRELFPLEADALLSEIELVRGAGAAFDLADFLAGRQTPVFFGSGINNFGVREVLRALSDWAPSPLPRDAVERTVEPTEPKFTGFVFKIQANMDPQHRDRIAFFRVCSGRYSPGMKVRHRRTGKDMKIANAVVFMANERQRSDDAVAGDIIGIHNHGQLQIGDTLTEGEALQFKGIPYFAPELFSKPRLRDPLRAKQLNKGLLELGEEGAVQVFEPFADNTLLIGAVGPLQFEIVAHRLKTEYGVDASFENAGIHTARWVTCPDAQHLAEFTKANSLRLAKDVDGNLVYLADTRVNLTLAQERWPKVAFHDTREHGQLLT.

Residues 21 to 289 enclose the tr-type G domain; it reads KKRRTFAIIS…ALSDWAPSPL (269 aa). Residues 30-37, 98-102, and 152-155 contribute to the GTP site; these read SHPDAGKT, DTPGH, and NKLD.

Belongs to the TRAFAC class translation factor GTPase superfamily. Classic translation factor GTPase family. PrfC subfamily.

The protein localises to the cytoplasm. Its function is as follows. Increases the formation of ribosomal termination complexes and stimulates activities of RF-1 and RF-2. It binds guanine nucleotides and has strong preference for UGA stop codons. It may interact directly with the ribosome. The stimulation of RF-1 and RF-2 is significantly reduced by GTP and GDP, but not by GMP. This is Peptide chain release factor 3 from Thiobacillus denitrificans (strain ATCC 25259 / T1).